Here is a 571-residue protein sequence, read N- to C-terminus: Proline--tRNA ligase (571 aa).

The protein belongs to the class-II aminoacyl-tRNA synthetase family. ProS type 1 subfamily. In terms of assembly, homodimer.

The protein localises to the cytoplasm. The enzyme catalyses tRNA(Pro) + L-proline + ATP = L-prolyl-tRNA(Pro) + AMP + diphosphate. Functionally, catalyzes the attachment of proline to tRNA(Pro) in a two-step reaction: proline is first activated by ATP to form Pro-AMP and then transferred to the acceptor end of tRNA(Pro). As ProRS can inadvertently accommodate and process non-cognate amino acids such as alanine and cysteine, to avoid such errors it has two additional distinct editing activities against alanine. One activity is designated as 'pretransfer' editing and involves the tRNA(Pro)-independent hydrolysis of activated Ala-AMP. The other activity is designated 'posttransfer' editing and involves deacylation of mischarged Ala-tRNA(Pro). The misacylated Cys-tRNA(Pro) is not edited by ProRS. This is Proline--tRNA ligase from Pseudomonas putida (strain ATCC 700007 / DSM 6899 / JCM 31910 / BCRC 17059 / LMG 24140 / F1).